Consider the following 177-residue polypeptide: Shikimate kinase (177 aa).

An ATP-binding site is contributed by Gly-14–Thr-19. Mg(2+) is bound at residue Ser-18. Substrate is bound by residues Asp-36, Arg-60, and Gly-82. Arg-120 contributes to the ATP binding site. Arg-139 serves as a coordination point for substrate.

It belongs to the shikimate kinase family. In terms of assembly, monomer. It depends on Mg(2+) as a cofactor.

It localises to the cytoplasm. The enzyme catalyses shikimate + ATP = 3-phosphoshikimate + ADP + H(+). Its pathway is metabolic intermediate biosynthesis; chorismate biosynthesis; chorismate from D-erythrose 4-phosphate and phosphoenolpyruvate: step 5/7. Functionally, catalyzes the specific phosphorylation of the 3-hydroxyl group of shikimic acid using ATP as a cosubstrate. The chain is Shikimate kinase from Gloeobacter violaceus (strain ATCC 29082 / PCC 7421).